The sequence spans 398 residues: 4-hydroxy-3-methylbut-2-enyl diphosphate reductase (398 aa).

Residue Cys-66 participates in [4Fe-4S] cluster binding. His-96 contributes to the (2E)-4-hydroxy-3-methylbut-2-enyl diphosphate binding site. Residue His-96 participates in dimethylallyl diphosphate binding. An isopentenyl diphosphate-binding site is contributed by His-96. Cys-157 lines the [4Fe-4S] cluster pocket. Position 185 (His-185) interacts with (2E)-4-hydroxy-3-methylbut-2-enyl diphosphate. His-185 is a dimethylallyl diphosphate binding site. His-185 provides a ligand contact to isopentenyl diphosphate. Glu-187 functions as the Proton donor in the catalytic mechanism. Position 250 (Thr-250) interacts with (2E)-4-hydroxy-3-methylbut-2-enyl diphosphate. Cys-288 provides a ligand contact to [4Fe-4S] cluster. Residues Ser-317, Ser-318, Asn-319, and Ser-380 each contribute to the (2E)-4-hydroxy-3-methylbut-2-enyl diphosphate site. Dimethylallyl diphosphate contacts are provided by Ser-317, Ser-318, Asn-319, and Ser-380. Isopentenyl diphosphate contacts are provided by Ser-317, Ser-318, Asn-319, and Ser-380.

Belongs to the IspH family. [4Fe-4S] cluster serves as cofactor.

The catalysed reaction is isopentenyl diphosphate + 2 oxidized [2Fe-2S]-[ferredoxin] + H2O = (2E)-4-hydroxy-3-methylbut-2-enyl diphosphate + 2 reduced [2Fe-2S]-[ferredoxin] + 2 H(+). The enzyme catalyses dimethylallyl diphosphate + 2 oxidized [2Fe-2S]-[ferredoxin] + H2O = (2E)-4-hydroxy-3-methylbut-2-enyl diphosphate + 2 reduced [2Fe-2S]-[ferredoxin] + 2 H(+). Its pathway is isoprenoid biosynthesis; dimethylallyl diphosphate biosynthesis; dimethylallyl diphosphate from (2E)-4-hydroxy-3-methylbutenyl diphosphate: step 1/1. The protein operates within isoprenoid biosynthesis; isopentenyl diphosphate biosynthesis via DXP pathway; isopentenyl diphosphate from 1-deoxy-D-xylulose 5-phosphate: step 6/6. In terms of biological role, catalyzes the conversion of 1-hydroxy-2-methyl-2-(E)-butenyl 4-diphosphate (HMBPP) into a mixture of isopentenyl diphosphate (IPP) and dimethylallyl diphosphate (DMAPP). Acts in the terminal step of the DOXP/MEP pathway for isoprenoid precursor biosynthesis. This Prochlorococcus marinus (strain MIT 9515) protein is 4-hydroxy-3-methylbut-2-enyl diphosphate reductase.